A 104-amino-acid polypeptide reads, in one-letter code: Large ribosomal subunit protein uL24 (104 aa).

Belongs to the universal ribosomal protein uL24 family. As to quaternary structure, part of the 50S ribosomal subunit.

One of two assembly initiator proteins, it binds directly to the 5'-end of the 23S rRNA, where it nucleates assembly of the 50S subunit. Its function is as follows. One of the proteins that surrounds the polypeptide exit tunnel on the outside of the subunit. This is Large ribosomal subunit protein uL24 from Pseudomonas savastanoi pv. phaseolicola (strain 1448A / Race 6) (Pseudomonas syringae pv. phaseolicola (strain 1448A / Race 6)).